The following is a 324-amino-acid chain: Beta-ketoacyl-[acyl-carrier-protein] synthase III (324 aa).

Active-site residues include Cys-114 and His-251. The tract at residues 252 to 256 (QANRR) is ACP-binding. The active site involves Asn-281.

Belongs to the thiolase-like superfamily. FabH family. As to quaternary structure, homodimer.

It is found in the cytoplasm. It carries out the reaction malonyl-[ACP] + acetyl-CoA + H(+) = 3-oxobutanoyl-[ACP] + CO2 + CoA. The protein operates within lipid metabolism; fatty acid biosynthesis. In terms of biological role, catalyzes the condensation reaction of fatty acid synthesis by the addition to an acyl acceptor of two carbons from malonyl-ACP. Catalyzes the first condensation reaction which initiates fatty acid synthesis and may therefore play a role in governing the total rate of fatty acid production. Possesses both acetoacetyl-ACP synthase and acetyl transacylase activities. Its substrate specificity determines the biosynthesis of branched-chain and/or straight-chain of fatty acids. This Paramagnetospirillum magneticum (strain ATCC 700264 / AMB-1) (Magnetospirillum magneticum) protein is Beta-ketoacyl-[acyl-carrier-protein] synthase III.